The following is a 394-amino-acid chain: NAD(P)H-quinone oxidoreductase subunit H (394 aa).

Belongs to the complex I 49 kDa subunit family. In terms of assembly, NDH-1 can be composed of about 15 different subunits; different subcomplexes with different compositions have been identified which probably have different functions.

Its subcellular location is the cellular thylakoid membrane. It catalyses the reaction a plastoquinone + NADH + (n+1) H(+)(in) = a plastoquinol + NAD(+) + n H(+)(out). The catalysed reaction is a plastoquinone + NADPH + (n+1) H(+)(in) = a plastoquinol + NADP(+) + n H(+)(out). In terms of biological role, NDH-1 shuttles electrons from an unknown electron donor, via FMN and iron-sulfur (Fe-S) centers, to quinones in the respiratory and/or the photosynthetic chain. The immediate electron acceptor for the enzyme in this species is believed to be plastoquinone. Couples the redox reaction to proton translocation, and thus conserves the redox energy in a proton gradient. Cyanobacterial NDH-1 also plays a role in inorganic carbon-concentration. The sequence is that of NAD(P)H-quinone oxidoreductase subunit H from Nostoc sp. (strain PCC 7120 / SAG 25.82 / UTEX 2576).